A 282-amino-acid chain; its full sequence is MKLAVITDSTATLPTDLKQDKAIFSLDIPVIIDDETYFEGRNLSIDDFYQKMADSQNLPKTSQPSLSELDNLLGLLSSKGYTHVIGLFLAGGISGFWQNIQFLAEEHPEIEMAFPDSKITSAPLGSMVKNVLDWSRQGMTFQAILNKLQEQIDGTTAFIMVDDLNHLVKGGRLSNGSALLGNLLSIKPILRFDEEGKIVVYEKVRTEKKAMKRLVEILNDLIADGQYNVFIIHSKAQDKADYLKRLLQDSGYQYDIEEVHFGAVIATHLGEGAIAFGVTPRL.

The DegV domain occupies 3-280 (LAVITDSTAT…EGAIAFGVTP (278 aa)). Hexadecanoate-binding residues include T61 and S94.

May bind long-chain fatty acids, such as palmitate, and may play a role in lipid transport or fatty acid metabolism. The sequence is that of DegV domain-containing protein SPy_0865/M5005_Spy0672 from Streptococcus pyogenes serotype M1.